Here is a 354-residue protein sequence, read N- to C-terminus: Guanine nucleotide-binding protein alpha-3 subunit (354 aa).

Gly2 carries N-myristoyl glycine lipidation. A lipid anchor (S-palmitoyl cysteine) is attached at Cys4. The G-alpha domain maps to 33 to 354 (KECKILLLGS…TNALKDSGIL (322 aa)). The G1 motif stretch occupies residues 36–49 (KILLLGSGESGKST). Residues 41–48 (GSGESGKS), 177–183 (LRARSKT), 202–206 (DVGGQ), 271–274 (NKID), and Ala326 each bind GTP. Residues Ser48 and Thr183 each contribute to the Mg(2+) site. The segment at 175–183 (DVLRARSKT) is G2 motif. Positions 198–207 (IHLFDVGGQR) are G3 motif. The G4 motif stretch occupies residues 267 to 274 (ILFLNKID). Residues 324 to 329 (TQATDT) form a G5 motif region.

Belongs to the G-alpha family. In terms of assembly, g proteins are composed of 3 units; alpha, beta and gamma. The alpha chain contains the guanine nucleotide binding site.

In terms of biological role, guanine nucleotide-binding proteins (G proteins) are involved as modulators or transducers in various transmembrane signaling systems. GPA3 plays an active role in transmission of the pheromone signal. This chain is Guanine nucleotide-binding protein alpha-3 subunit (GPA3), found in Mycosarcoma maydis (Corn smut fungus).